The primary structure comprises 250 residues: ATP synthase subunit a (250 aa).

6 consecutive transmembrane segments (helical) span residues 29–49, 84–104, 114–134, 143–163, 189–209, and 216–236; these read ASLFMVATVACAAGFLYFATS, FFPMVFSLFMFVLTANLLGMM, IVVTFALAIFVIGTVLVYGFY, LFVPSGVPGALLLLVVPIEVI, VFAGFVASLGSLGALGVGGAL, and VALTGLEFLVAFLQAYVFAVL.

It belongs to the ATPase A chain family. In terms of assembly, F-type ATPases have 2 components, CF(1) - the catalytic core - and CF(0) - the membrane proton channel. CF(1) has five subunits: alpha(3), beta(3), gamma(1), delta(1), epsilon(1). CF(0) has three main subunits: a(1), b(2) and c(9-12). The alpha and beta chains form an alternating ring which encloses part of the gamma chain. CF(1) is attached to CF(0) by a central stalk formed by the gamma and epsilon chains, while a peripheral stalk is formed by the delta and b chains.

It localises to the cell inner membrane. Key component of the proton channel; it plays a direct role in the translocation of protons across the membrane. In Allorhizobium ampelinum (strain ATCC BAA-846 / DSM 112012 / S4) (Agrobacterium vitis (strain S4)), this protein is ATP synthase subunit a.